We begin with the raw amino-acid sequence, 454 residues long: UPF0210 protein Mlab_1030 (454 aa).

It belongs to the UPF0210 family.

The protein is UPF0210 protein Mlab_1030 of Methanocorpusculum labreanum (strain ATCC 43576 / DSM 4855 / Z).